The following is a 256-amino-acid chain: Small ribosomal subunit protein eS1 (256 aa).

Over residues 1–18 the composition is skewed to basic residues; the sequence is MAVGKNKRLSKGKKGIKK. Residues 1-20 are disordered; that stretch reads MAVGKNKRLSKGKKGIKKRT. Ala2 is subject to N-acetylalanine; partial.

The protein belongs to the eukaryotic ribosomal protein eS1 family. As to quaternary structure, component of the small ribosomal subunit. Mature ribosomes consist of a small (40S) and a large (60S) subunit. The 40S subunit contains about 33 different proteins and 1 molecule of RNA (18S). The 60S subunit contains about 49 different proteins and 3 molecules of RNA (25S, 5.8S and 5S).

The protein resides in the cytoplasm. The protein is Small ribosomal subunit protein eS1 (rps1) of Aspergillus flavus (strain ATCC 200026 / FGSC A1120 / IAM 13836 / NRRL 3357 / JCM 12722 / SRRC 167).